Consider the following 453-residue polypeptide: DNA repair protein RadA (453 aa).

A C4-type zinc finger spans residues 11–28; sequence CNQCGATAPKWLGQCPGC. Position 93-100 (93-100) interacts with ATP; sequence GDPGIGKS. The short motif at 250–254 is the RadA KNRFG motif element; it reads KNRFG. The lon-protease-like stretch occupies residues 349-453; the sequence is DVFLSITGGL…TIKDAIRLLL (105 aa).

Belongs to the RecA family. RadA subfamily.

In terms of biological role, DNA-dependent ATPase involved in processing of recombination intermediates, plays a role in repairing DNA breaks. Stimulates the branch migration of RecA-mediated strand transfer reactions, allowing the 3' invading strand to extend heteroduplex DNA faster. Binds ssDNA in the presence of ADP but not other nucleotides, has ATPase activity that is stimulated by ssDNA and various branched DNA structures, but inhibited by SSB. Does not have RecA's homology-searching function. The protein is DNA repair protein RadA of Chlamydia pneumoniae (Chlamydophila pneumoniae).